Reading from the N-terminus, the 156-residue chain is Small ribosomal subunit protein bS16 (156 aa).

Composition is skewed to low complexity over residues 113–123 (AESGTTAAATT) and 137–156 (EAPAEAAEAPAEAADAASES). Positions 113 to 156 (AESGTTAAATTPKKKKAPKKDEAAEAPAEAAEAPAEAADAASES) are disordered.

It belongs to the bacterial ribosomal protein bS16 family.

The chain is Small ribosomal subunit protein bS16 from Mycolicibacterium smegmatis (strain ATCC 700084 / mc(2)155) (Mycobacterium smegmatis).